Consider the following 72-residue polypeptide: Translation initiation factor IF-1 (72 aa).

An S1-like domain is found at 2 to 72; the sequence is AKEDVIEVEG…TRGRITYRYK (71 aa). Tyr-60 bears the Phosphotyrosine mark.

Belongs to the IF-1 family. Component of the 30S ribosomal translation pre-initiation complex which assembles on the 30S ribosome in the order IF-2 and IF-3, IF-1 and N-formylmethionyl-tRNA(fMet); mRNA recruitment can occur at any time during PIC assembly.

It localises to the cytoplasm. One of the essential components for the initiation of protein synthesis. Stabilizes the binding of IF-2 and IF-3 on the 30S subunit to which N-formylmethionyl-tRNA(fMet) subsequently binds. Helps modulate mRNA selection, yielding the 30S pre-initiation complex (PIC). Upon addition of the 50S ribosomal subunit IF-1, IF-2 and IF-3 are released leaving the mature 70S translation initiation complex. This chain is Translation initiation factor IF-1, found in Halalkalibacterium halodurans (strain ATCC BAA-125 / DSM 18197 / FERM 7344 / JCM 9153 / C-125) (Bacillus halodurans).